The sequence spans 2514 residues: Nuclear receptor corepressor 2 (2514 aa).

A compositionally biased stretch (polar residues) spans 1-13; that stretch reads MSGSTQPVAQTWR. The segment at 1–24 is disordered; it reads MSGSTQPVAQTWRATEPRYPPHSL. Arginine 18 is modified (asymmetric dimethylarginine). A phosphoserine mark is found at serine 54, serine 67, serine 149, and serine 152. Disordered stretches follow at residues 120 to 162 and 190 to 220; these read PSPL…ELEL and ISKL…PPIE. Position 156 is a phosphothreonine (threonine 156). Residues 174 to 215 adopt a coiled-coil conformation; it reads QNMDRVDREITMVEQQISKLKKKQQQLEEEAAKPPEPEKPVS. The span at 203–212 shows a compositional bias: basic and acidic residues; sequence EAAKPPEPEK. Serine 215 carries the phosphoserine modification. An interaction with SIN3A/B region spans residues 254 to 312; the sequence is LPLYNQPSDTRQYHENIKINQAMRKKLILYFKRRNHARKQWEQKFCQRYDQLMEAWEKK. Positions 389–480 are deacetylase activation domain (DAD); sequence MRQLAVIPPM…YLTKKNENYK (92 aa). Positions 427–478 constitute an SANT 1 domain; it reads QVMNMWSEQEKETFREKFMQHPKNFGLIASFLERKTVAECVLYYYLTKKNEN. Residues lysine 449, tyrosine 470, and tyrosine 471 each contribute to the 1D-myo-inositol 1,4,5,6-tetrakisphosphate site. Disordered regions lie at residues 487 to 622, 674 to 1081, and 1165 to 1186; these read YRRR…EMET, EKER…APPG, and SGVK…SLGV. Serine 493 bears the Phosphoserine mark. The segment covering 494–510 has biased composition (low complexity); sequence QQQQQQQQQQQQQQQQQ. Positions 516–552 are enriched in basic and acidic residues; it reads SQEEKDEKEKEKEAEKEEEKPEVENDKEDLLKEKTDD. Residues 522-561 are a coiled coil; the sequence is EKEKEKEAEKEEEKPEVENDKEDLLKEKTDDTSGEDNDEK. Threonine 553 is modified (phosphothreonine). The residue at position 554 (serine 554) is a Phosphoserine. Composition is skewed to polar residues over residues 597 to 613 and 740 to 753; these read TPQQ…NESS and ATVN…SIPS. In terms of domain architecture, SANT 2 spans 610 to 661; it reads NESSRWTEEEMETAKKGLLEHGRNWSAIARMVGSKTVSQCKNFYFNYKKRQN. Serine 750 and serine 753 each carry phosphoserine. 2 stretches are compositionally biased toward pro residues: residues 777–796 and 806–822; these read GPPP…PTEP and PTPP…PPVV. The segment covering 856–866 has biased composition (basic and acidic residues); it reads GKAEEPVKSEC. Lysine 878 bears the N6-acetyllysine mark. The segment covering 902 to 921 has biased composition (polar residues); the sequence is RATTAKSSGAPQDSDSSATC. Low complexity predominate over residues 937–948; the sequence is LLSPRPSLLTPT. Serine 939 bears the Phosphoserine mark. Threonine 946 is modified (phosphothreonine). Serine 956 is modified (phosphoserine). Lysine 959 bears the N6-acetyllysine mark. The segment covering 980 to 990 has biased composition (basic and acidic residues); that stretch reads KVHEPPREDAA. Residues 993–1004 are compositionally biased toward pro residues; that stretch reads KPAPPAPPPPQN. Over residues 1005 to 1014 the composition is skewed to polar residues; sequence LQPESDAPQQ. A Glycyl lysine isopeptide (Lys-Gly) (interchain with G-Cter in SUMO2) cross-link involves residue lysine 1168. A Phosphoserine modification is found at serine 1173. Lysine 1210 and lysine 1240 each carry N6-acetyllysine. Phosphoserine is present on serine 1251. Residues 1287-1307 form a disordered region; that stretch reads TQCSKEDGRSSSGPPHETAAP. Serine 1323 carries the post-translational modification Phosphoserine. Threonine 1383 is subject to Phosphothreonine. 2 disordered regions span residues 1440-1482 and 1506-1609; these read PLAP…SPGR and ESLK…HPIS. Serine 1479 is modified (phosphoserine). A compositionally biased stretch (low complexity) spans 1513-1526; the sequence is GTASSSGGSIARGA. A phosphoserine mark is found at serine 1539, serine 1595, and serine 1619. Asymmetric dimethylarginine is present on arginine 1653. 2 disordered regions span residues 1763-1867 and 1937-2124; these read TAPQ…TQDA and KEAP…PGVK. The segment covering 1766–1782 has biased composition (low complexity); the sequence is QPFSSRHSSSPLSPGGP. Phosphoserine occurs at positions 1775 and 1778. The segment covering 1794 to 1813 has biased composition (basic and acidic residues); sequence SERERDRDRERDRDREREKS. At serine 1861 the chain carries Phosphoserine. Over residues 1938–1952 the composition is skewed to basic and acidic residues; it reads EAPRVARPERPRADT. Residue lysine 1959 is modified to N6-acetyllysine. Serine 2005 bears the Phosphoserine mark. Lysine 2026 is modified (N6-acetyllysine). Positions 2043–2060 are enriched in low complexity; it reads SSYSPEGVEPVSPVSSPS. Phosphoserine occurs at positions 2046, 2054, 2057, 2058, and 2060. Position 2062 is a phosphothreonine (threonine 2062). Over residues 2062 to 2085 the composition is skewed to basic and acidic residues; it reads THDKGLPKHLEELDKSHLEGELRP. Serine 2077 is subject to Phosphoserine. Low complexity predominate over residues 2106 to 2117; the sequence is LPESQPSSSPLL. The segment at 2128–2131 is required for interaction with RARA in the absence of its ligand; that stretch reads RVVT. A CORNR box of ID1 motif is present at residues 2136–2140; the sequence is ISEVI. Disordered stretches follow at residues 2174-2235 and 2248-2269; these read RRPP…GHSR and QTEP…PAFF. Serine 2203, serine 2223, and serine 2258 each carry phosphoserine. Residues 2339–2343 carry the CORNR box of ID2 motif; sequence LEAII. Residues 2384 to 2500 form a disordered region; that stretch reads DGRSDHTLTS…PHHAWDEEPK (117 aa). Serine 2413 carries the post-translational modification Phosphoserine. Over residues 2482–2492 the composition is skewed to low complexity; it reads PAGSGPLAGPH.

This sequence belongs to the N-CoR nuclear receptor corepressors family. Forms a large corepressor complex that contains SIN3A/B and histone deacetylases HDAC1 and HDAC2. This complex associates with the thyroid (TR) and the retinoid acid receptors (RAR) in the absence of ligand, and may stabilize their interaction with TFIIB. Interacts directly with RARA in the absence of ligand; the interaction represses RARA activity. Interacts (isoform SMRT) with HDAC10. Interacts with MINT. Component of the N-Cor repressor complex, at least composed of NCOR1, NCOR2, HDAC3, TBL1X, TBL1R, CORO2A and GPS2. Interacts with CBFA2T3 and ATXN1L. Interacts with RARB; the interaction is weak and does not repress RARB transactivational activity. Interacts (via 1D-myo-inositol 1,4,5,6-tetrakisphosphate) with HDAC3; promoting the histone deacetylase activity of HDAC3. Interacts with HDAC7 and C1D. Interacts with NR4A2; this interaction increases in the absence of PITX3. Interacts with BCL6 (via the BTB domain), required for BCL6 transcriptional repressor activity on a subset of target genes. Forms ternary complexes with BCOR and BCL6 on target gene promoters but, on enhancer elements, interacts with BCL6 and HDAC3 to repress proximal gene expression. May interact with DEAF1. Interacts with RXRA. Interacts with MECP2. Interacts with ZBTB7A. Interacts with AR. Interacts with TBL1Y. Interacts with SANBR (via the BTB domain). Ubiquitous. High levels of expression are detected in lung, spleen and brain.

The protein resides in the nucleus. In terms of biological role, transcriptional corepressor that mediates the transcriptional repression activity of some nuclear receptors by promoting chromatin condensation, thus preventing access of the basal transcription. Acts by recruiting chromatin modifiers, such as histone deacetylases HDAC1, HDAC2 and HDAC3. Required to activate the histone deacetylase activity of HDAC3. Involved in the regulation BCL6-dependent of the germinal center (GC) reactions, mainly through the control of the GC B-cells proliferation and survival. Recruited by ZBTB7A to the androgen response elements/ARE on target genes, negatively regulates androgen receptor signaling and androgen-induced cell proliferation. Isoform 1 and isoform 4 have different affinities for different nuclear receptors. In Homo sapiens (Human), this protein is Nuclear receptor corepressor 2.